Reading from the N-terminus, the 318-residue chain is SPX domain-containing protein 4 (318 aa).

Residues 1–187 form the SPX domain; sequence MKFGKEFRTH…GGLLRLPFTQ (187 aa). Positions 226–237 are enriched in low complexity; it reads SAVQAHSSSHQH. Disordered stretches follow at residues 226-247 and 284-318; these read SAVQAHSSSHQHNSPRISAETS and SSLLQNEDDETVTAENSPNSGNKDDSEKEDTGPSH. The span at 305-318 shows a compositional bias: basic and acidic residues; sequence NKDDSEKEDTGPSH.

This chain is SPX domain-containing protein 4 (SPX4), found in Arabidopsis thaliana (Mouse-ear cress).